Consider the following 150-residue polypeptide: Histone H3-like centromeric protein A (150 aa).

Residues 1 to 55 form a disordered region; it reads MRPGSTPPSRRKSRPPRRVSPPLPTTSRTSPRRPHAQQQRRASRASPKKRFRPGT. Basic residues predominate over residues 41–53; that stretch reads RASRASPKKRFRP. An H3-like region spans residues 53-150; sequence PGTRALMEIR…RIRGVNEGLG (98 aa).

This sequence belongs to the histone H3 family. In terms of assembly, component of centromeric nucleosomes, where DNA is wrapped around a histone octamer core. The octamer contains two molecules each of H2A, H2B, CENPA and H4 assembled in one CENPA-H4 heterotetramer and two H2A-H2B heterodimers. CENPA modulates the DNA-binding characteristics of nucleosomes so that protruding DNA ends have higher flexibility than in nucleosomes containing conventional histone H3.

It localises to the nucleus. The protein localises to the chromosome. Its subcellular location is the centromere. Functionally, histone H3-like nucleosomal protein that is specifically found in centromeric nucleosomes. Replaces conventional H3 in the nucleosome core of centromeric chromatin that serves as an assembly site for the inner kinetochore. The presence of CENPA subtly modifies the nucleosome structure and the way DNA is wrapped around the nucleosome and gives rise to protruding DNA ends that are less well-ordered and rigid compared to nucleosomes containing histone H3. May serve as an epigenetic mark that propagates centromere identity through replication and cell division. Required for recruitment and assembly of kinetochore proteins, and as a consequence required for progress through mitosis, chromosome segregation and cytokinesis. This Xenopus laevis (African clawed frog) protein is Histone H3-like centromeric protein A (cenpa).